The primary structure comprises 447 residues: Transcriptional enhancer factor TEF-4 (447 aa).

2 disordered regions span residues 1 to 46 (MGEP…GVWS) and 183 to 218 (TPFTLSLTPPSTDLPGYEPPQALSPLPPPTPSPPAW). The span at 11–20 (DDGSGWTGSE) shows a compositional bias: low complexity. A compositionally biased stretch (gly residues) spans 25–40 (EGTGGSEGAGGDGGPD). Positions 38–114 (GPDAEGVWSP…QVLARRKSRE (77 aa)) form a DNA-binding region, TEA. The tract at residues 172–447 (WNVPDVKPFS…QHHIYRLVRD (276 aa)) is transcriptional activation. The span at 183 to 206 (TPFTLSLTPPSTDLPGYEPPQALS) shows a compositional bias: low complexity. Residues 207–216 (PLPPPTPSPP) are compositionally biased toward pro residues.

As to quaternary structure, interacts with YAP1 and WWTR1/TAZ.

It localises to the nucleus. Its function is as follows. Transcription factor which plays a key role in the Hippo signaling pathway, a pathway involved in organ size control and tumor suppression by restricting proliferation and promoting apoptosis. The core of this pathway is composed of a kinase cascade wherein MST1/MST2, in complex with its regulatory protein SAV1, phosphorylates and activates LATS1/2 in complex with its regulatory protein MOB1, which in turn phosphorylates and inactivates YAP1 oncoprotein and WWTR1/TAZ. Acts by mediating gene expression of YAP1 and WWTR1/TAZ, thereby regulating cell proliferation, migration and epithelial mesenchymal transition (EMT) induction. Binds to the SPH and GT-IIC 'enhansons' (5'-GTGGAATGT-3'). May be involved in the gene regulation of neural development. Binds to the M-CAT motif. This chain is Transcriptional enhancer factor TEF-4 (TEAD2), found in Homo sapiens (Human).